We begin with the raw amino-acid sequence, 220 residues long: MKAVCLLSGGMDSSTLACLAKHDGYDILALHFSYGQRTEEKERECAKRIARHLNALEFLEVDLTYLKAVGASSLTDYAMQVKAHEDAGDGIPDTYVPFRNANLLSVATSFAEARGADAIYIGVQASDYSGYPDCRPEFIDAFQKVITLGTRPDAGIILKTPFVKLNKAEILKIGMDLNVPYEDTWSCYAENEVACGICGSCHYRLEAFRQIGIQDPIPYR.

Position 7–17 (7–17) interacts with ATP; that stretch reads LSGGMDSSTLA. Positions 187, 195, 198, and 201 each coordinate Zn(2+).

Belongs to the QueC family. Requires Zn(2+) as cofactor.

It carries out the reaction 7-carboxy-7-deazaguanine + NH4(+) + ATP = 7-cyano-7-deazaguanine + ADP + phosphate + H2O + H(+). It functions in the pathway purine metabolism; 7-cyano-7-deazaguanine biosynthesis. Its function is as follows. Catalyzes the ATP-dependent conversion of 7-carboxy-7-deazaguanine (CDG) to 7-cyano-7-deazaguanine (preQ(0)). The sequence is that of 7-cyano-7-deazaguanine synthase from Methanospirillum hungatei JF-1 (strain ATCC 27890 / DSM 864 / NBRC 100397 / JF-1).